The sequence spans 481 residues: 6-phosphogluconate dehydrogenase, decarboxylating (481 aa).

NADP(+)-binding positions include 11 to 16 (GLAVMG), 34 to 36 (NRT), 76 to 78 (VKG), and Asn-104. Substrate-binding positions include Asn-104 and 130–132 (SGG). Lys-184 serves as the catalytic Proton acceptor. Residue 187–188 (HN) coordinates substrate. Glu-191 functions as the Proton donor in the catalytic mechanism. Substrate-binding residues include Tyr-192, Lys-259, Arg-286, Arg-445, and His-451.

It belongs to the 6-phosphogluconate dehydrogenase family. Homodimer.

The enzyme catalyses 6-phospho-D-gluconate + NADP(+) = D-ribulose 5-phosphate + CO2 + NADPH. The protein operates within carbohydrate degradation; pentose phosphate pathway; D-ribulose 5-phosphate from D-glucose 6-phosphate (oxidative stage): step 3/3. Catalyzes the oxidative decarboxylation of 6-phosphogluconate to ribulose 5-phosphate and CO(2), with concomitant reduction of NADP to NADPH. This is 6-phosphogluconate dehydrogenase, decarboxylating (Pgd) from Drosophila simulans (Fruit fly).